The sequence spans 209 residues: uncharacterized protein (209 aa).

Residues 41-76 (NVENLCLIRNKLKTDIENLLENKIDVENKLLVLRNQ) are a coiled coil.

This is an uncharacterized protein from Acanthamoeba polyphaga (Amoeba).